The primary structure comprises 86 residues: Large ribosomal subunit protein bL31B (86 aa).

The protein belongs to the bacterial ribosomal protein bL31 family. Type B subfamily. Part of the 50S ribosomal subunit.

The sequence is that of Large ribosomal subunit protein bL31B from Salmonella paratyphi A (strain ATCC 9150 / SARB42).